Here is a 200-residue protein sequence, read N- to C-terminus: 3-isopropylmalate dehydratase small subunit (200 aa).

This sequence belongs to the LeuD family. LeuD type 1 subfamily. In terms of assembly, heterodimer of LeuC and LeuD.

It carries out the reaction (2R,3S)-3-isopropylmalate = (2S)-2-isopropylmalate. The protein operates within amino-acid biosynthesis; L-leucine biosynthesis; L-leucine from 3-methyl-2-oxobutanoate: step 2/4. Catalyzes the isomerization between 2-isopropylmalate and 3-isopropylmalate, via the formation of 2-isopropylmaleate. The protein is 3-isopropylmalate dehydratase small subunit of Yersinia pseudotuberculosis serotype O:1b (strain IP 31758).